Reading from the N-terminus, the 483-residue chain is tRNA sulfurtransferase (483 aa).

The THUMP domain maps to 62–166; it reads PEICDALTRI…QDKLILVKAR (105 aa). ATP is bound by residues 184–185, Lys-266, Gly-288, and Gln-297; that span reads LI. Cys-345 and Cys-457 are oxidised to a cystine. The Rhodanese domain occupies 405-483; sequence LADTDVLLDI…GYTNVKVYRP (79 aa). Cys-457 serves as the catalytic Cysteine persulfide intermediate.

This sequence belongs to the ThiI family.

It localises to the cytoplasm. The catalysed reaction is [ThiI sulfur-carrier protein]-S-sulfanyl-L-cysteine + a uridine in tRNA + 2 reduced [2Fe-2S]-[ferredoxin] + ATP + H(+) = [ThiI sulfur-carrier protein]-L-cysteine + a 4-thiouridine in tRNA + 2 oxidized [2Fe-2S]-[ferredoxin] + AMP + diphosphate. It catalyses the reaction [ThiS sulfur-carrier protein]-C-terminal Gly-Gly-AMP + S-sulfanyl-L-cysteinyl-[cysteine desulfurase] + AH2 = [ThiS sulfur-carrier protein]-C-terminal-Gly-aminoethanethioate + L-cysteinyl-[cysteine desulfurase] + A + AMP + 2 H(+). It functions in the pathway cofactor biosynthesis; thiamine diphosphate biosynthesis. In terms of biological role, catalyzes the ATP-dependent transfer of a sulfur to tRNA to produce 4-thiouridine in position 8 of tRNAs, which functions as a near-UV photosensor. Also catalyzes the transfer of sulfur to the sulfur carrier protein ThiS, forming ThiS-thiocarboxylate. This is a step in the synthesis of thiazole, in the thiamine biosynthesis pathway. The sulfur is donated as persulfide by IscS. The chain is tRNA sulfurtransferase from Yersinia pseudotuberculosis serotype IB (strain PB1/+).